The sequence spans 189 residues: Probable thymidylate kinase 1 (189 aa).

Residue 9–16 (GIDGSGKT) coordinates ATP.

It belongs to the thymidylate kinase family.

The catalysed reaction is dTMP + ATP = dTDP + ADP. The protein is Probable thymidylate kinase 1 (tmk1) of Saccharolobus solfataricus (strain ATCC 35092 / DSM 1617 / JCM 11322 / P2) (Sulfolobus solfataricus).